A 357-amino-acid chain; its full sequence is Solute carrier family 25 member 3 (357 aa).

The N-terminal 45 residues, Met-1–Ala-45, are a transit peptide targeting the mitochondrion. Topologically, residues Ala-46–Lys-58 are mitochondrial intermembrane. Solcar repeat units lie at residues Lys-58 to Leu-142, Trp-155 to Ala-239, and Glu-256 to Tyr-334. The helical transmembrane segment at Tyr-59–Leu-81 threads the bilayer. Over Asp-82–Lys-116 the chain is Mitochondrial matrix. At Lys-94 the chain carries N6-acetyllysine. Position 107 is an N6-methyllysine (Lys-107). A helical transmembrane segment spans residues Gly-117–Tyr-136. Residues Glu-137–Arg-156 are Mitochondrial intermembrane-facing. Residues Thr-157 to Met-178 traverse the membrane as a helical segment. The Mitochondrial matrix segment spans residues Glu-179 to Lys-213. Phosphotyrosine is present on Tyr-191. N6-acetyllysine is present on Lys-204. Residues Gly-214–Phe-233 form a helical membrane-spanning segment. Topologically, residues Glu-234–Glu-256 are mitochondrial intermembrane. Residues Gln-257–Ala-279 form a helical membrane-spanning segment. Residues Asp-280–Gly-309 lie on the Mitochondrial matrix side of the membrane. A helical transmembrane segment spans residues Leu-310–Tyr-328. Over Asp-329–Glu-357 the chain is Mitochondrial intermembrane.

Belongs to the mitochondrial carrier (TC 2.A.29) family. Interacts with PPIF; the interaction is impaired by CsA.

It is found in the mitochondrion inner membrane. The enzyme catalyses phosphate(in) + H(+)(in) = phosphate(out) + H(+)(out). Its function is as follows. Inorganic ion transporter that transports phosphate or copper ions across the mitochondrial inner membrane into the matrix compartment. Mediates proton-coupled symport of phosphate ions necessary for mitochondrial oxidative phosphorylation of ADP to ATP. Transports copper ions probably in the form of anionic copper(I) complexes to maintain mitochondrial matrix copper pool and to supply copper for cytochrome C oxidase complex assembly. May also play a role in regulation of the mitochondrial permeability transition pore (mPTP). The chain is Solute carrier family 25 member 3 from Mus musculus (Mouse).